Consider the following 424-residue polypeptide: SWI/SNF and RSC complexes subunit arp42 (424 aa).

The protein belongs to the actin family. Component of the RSC complex composed of at least arp9, arp42, rsc1, rsc4, rsc7, rsc9, rsc58, sfh1, snf21, ssr1, ssr2, ssr3 and ssr4. The complex interacts with histone and histone variant components of centromeric chromatin. Component of the SWI/SNF global transcription activator complex composed of at least arp9, arp42, snf5, snf22, snf30, sbf59, sol1, ssr1, ssr2, ssr3, ssr4 and tfg3.

The protein resides in the cytoplasm. Its subcellular location is the nucleus. Its function is as follows. Component of the chromatin structure remodeling complex (RSC), which is involved in transcription regulation and nucleosome positioning. Controls particularly membrane and organelle development genes. Part of the SWI/SNF complex, an ATP-dependent chromatin remodeling complex, required for the positive and negative regulation of gene expression of a large number of genes. It changes chromatin structure by altering DNA-histone contacts within a nucleosome, leading eventually to a change in nucleosome position, thus facilitating or repressing binding of gene-specific transcription factors. This Schizosaccharomyces pombe (strain 972 / ATCC 24843) (Fission yeast) protein is SWI/SNF and RSC complexes subunit arp42 (arp42).